We begin with the raw amino-acid sequence, 335 residues long: L-tyrosine isonitrile synthase (335 aa).

Belongs to the isocyanide synthase family.

It carries out the reaction D-ribulose 5-phosphate + L-tyrosine = (2S)-3-(4-hydroxyphenyl)-2-isocyanopropanoate + hydroxyacetone + formaldehyde + phosphate + H2O + H(+). Its function is as follows. Involved in the biosynthesis of rhabduscin, a tyrosine derivative which is a potent inhibitor of phenoloxidase, a key component of the insect's innate immune system. Responsible for the synthesis of the isonitrile group on tyrosine using the C2 of ribulose 5-phosphate as the source of the carbon atom. The protein is L-tyrosine isonitrile synthase of Xenorhabdus nematophila (strain ATCC 19061 / DSM 3370 / CCUG 14189 / LMG 1036 / NCIMB 9965 / AN6).